A 386-amino-acid chain; its full sequence is F420 non-reducing hydrogenase I small subunit (386 aa).

The tat-type signal signal peptide spans 1–51 (MVEMSTGTTNLVRTLDSMDFLKMDRRTFMKAVSALGATAFLGTYQTEIVNA). [4Fe-4S] cluster contacts are provided by cysteine 67, cysteine 70, cysteine 178, cysteine 227, histidine 273, cysteine 276, cysteine 296, and cysteine 302. [3Fe-4S] cluster-binding residues include cysteine 311, cysteine 330, and cysteine 333.

It belongs to the [NiFe]/[NiFeSe] hydrogenase small subunit family. Composed of a large subunit (VhoA), a small subunit (VhoG) and a cytochrome subunit (VhoC). [4Fe-4S] cluster serves as cofactor. The cofactor is [3Fe-4S] cluster. Predicted to be exported by the Tat system. The position of the signal peptide cleavage has not been experimentally proven.

It is found in the cell membrane. It carries out the reaction methanophenazine + H2 = dihydromethanophenazine. Functionally, part of the F420 non-reducing hydrogenase I complex that catalyzes the reduction of methanophenazine to dihydromethanophenazine. This Methanosarcina mazei (strain ATCC BAA-159 / DSM 3647 / Goe1 / Go1 / JCM 11833 / OCM 88) (Methanosarcina frisia) protein is F420 non-reducing hydrogenase I small subunit.